We begin with the raw amino-acid sequence, 330 residues long: Protoheme IX farnesyltransferase (330 aa).

The next 9 helical transmembrane spans lie at 33–53, 54–74, 101–121, 126–146, 154–174, 180–200, 227–247, 250–270, and 308–328; these read VMTLVVFTAFAGLIAAPVDAD, PFLAFMSILCLAVGAGAAGAL, VSNAYGFGVVASILSVLLMAL, LAAGLLAFSIFFYAVIYTMIL, IVIGGAAGAFPPMIGWVAATG, AVILFMIIFLWTPPHSWALAL, ILLYSIVLVIFAGAPVLTGLG, VYGATSLGGGALFLLLAWRIF, and VLFAALIVEHAFGAYVAIPGV.

Belongs to the UbiA prenyltransferase family. Protoheme IX farnesyltransferase subfamily. As to quaternary structure, interacts with CtaA.

It localises to the cell inner membrane. It carries out the reaction heme b + (2E,6E)-farnesyl diphosphate + H2O = Fe(II)-heme o + diphosphate. It functions in the pathway porphyrin-containing compound metabolism; heme O biosynthesis; heme O from protoheme: step 1/1. Its function is as follows. Converts heme B (protoheme IX) to heme O by substitution of the vinyl group on carbon 2 of heme B porphyrin ring with a hydroxyethyl farnesyl side group. This is Protoheme IX farnesyltransferase from Maricaulis maris (strain MCS10) (Caulobacter maris).